The sequence spans 378 residues: Glutamate 5-kinase (378 aa).

Lysine 21 lines the ATP pocket. 3 residues coordinate substrate: serine 61, aspartate 148, and asparagine 160. 180–181 (TD) is a binding site for ATP. The PUA domain occupies 286-364 (RGTLVLDAGA…RRIEELLGYM (79 aa)).

It belongs to the glutamate 5-kinase family.

The protein resides in the cytoplasm. The enzyme catalyses L-glutamate + ATP = L-glutamyl 5-phosphate + ADP. It participates in amino-acid biosynthesis; L-proline biosynthesis; L-glutamate 5-semialdehyde from L-glutamate: step 1/2. Its function is as follows. Catalyzes the transfer of a phosphate group to glutamate to form L-glutamate 5-phosphate. The sequence is that of Glutamate 5-kinase from Chromohalobacter salexigens (strain ATCC BAA-138 / DSM 3043 / CIP 106854 / NCIMB 13768 / 1H11).